The sequence spans 92 residues: Small ribosomal subunit protein uS19 (92 aa).

The protein belongs to the universal ribosomal protein uS19 family.

In terms of biological role, protein S19 forms a complex with S13 that binds strongly to the 16S ribosomal RNA. This chain is Small ribosomal subunit protein uS19, found in Ruegeria pomeroyi (strain ATCC 700808 / DSM 15171 / DSS-3) (Silicibacter pomeroyi).